The chain runs to 661 residues: Transketolase (661 aa).

Position 30 (His-30) interacts with substrate. Residues His-70 and 118–120 contribute to the thiamine diphosphate site; that span reads GPL. The tract at residues 99 to 118 is disordered; the sequence is STTPGHPEFRDTPGVEATTG. Mg(2+) is bound at residue Asp-159. Thiamine diphosphate contacts are provided by Gly-160 and Asn-189. Asn-189 and Val-191 together coordinate Mg(2+). Substrate contacts are provided by His-266, Arg-357, and Ser-384. Position 266 (His-266) interacts with thiamine diphosphate. Glu-411 (proton donor) is an active-site residue. Residue Phe-437 participates in thiamine diphosphate binding. 3 residues coordinate substrate: His-461, Asp-469, and Arg-520.

This sequence belongs to the transketolase family. As to quaternary structure, homodimer. Requires Mg(2+) as cofactor. The cofactor is Ca(2+). Mn(2+) serves as cofactor. Co(2+) is required as a cofactor. It depends on thiamine diphosphate as a cofactor.

The catalysed reaction is D-sedoheptulose 7-phosphate + D-glyceraldehyde 3-phosphate = aldehydo-D-ribose 5-phosphate + D-xylulose 5-phosphate. Its function is as follows. Catalyzes the transfer of a two-carbon ketol group from a ketose donor to an aldose acceptor, via a covalent intermediate with the cofactor thiamine pyrophosphate. This is Transketolase (tkt) from Physarum polycephalum (Slime mold).